The sequence spans 393 residues: Proteasome-activating nucleotidase (393 aa).

Residues 14-53 adopt a coiled-coil conformation; it reads SDEVQLVRLLEEKIKSLQIEIENLRKELNYYKAEMEKMLS. ATP is bound by residues 178–183 and tyrosine 317; that span reads GTGKTM. A docks into pockets in the proteasome alpha-ring to cause gate opening region spans residues 391–393; it reads KYS.

The protein belongs to the AAA ATPase family. As to quaternary structure, homohexamer. The hexameric complex has a two-ring architecture resembling a top hat that caps the 20S proteasome core at one or both ends. Upon ATP-binding, the C-terminus of PAN interacts with the alpha-rings of the proteasome core by binding to the intersubunit pockets.

Its subcellular location is the cytoplasm. Its function is as follows. ATPase which is responsible for recognizing, binding, unfolding and translocation of substrate proteins into the archaeal 20S proteasome core particle. Is essential for opening the gate of the 20S proteasome via an interaction with its C-terminus, thereby allowing substrate entry and access to the site of proteolysis. Thus, the C-termini of the proteasomal ATPase function like a 'key in a lock' to induce gate opening and therefore regulate proteolysis. Unfolding activity requires energy from ATP hydrolysis, whereas ATP binding alone promotes ATPase-20S proteasome association which triggers gate opening, and supports translocation of unfolded substrates. The chain is Proteasome-activating nucleotidase from Saccharolobus islandicus (strain M.16.27) (Sulfolobus islandicus).